We begin with the raw amino-acid sequence, 188 residues long: Elongation factor P (188 aa).

Residue lysine 34 is modified to N6-(3,6-diaminohexanoyl)-5-hydroxylysine.

It belongs to the elongation factor P family. May be beta-lysylated on the epsilon-amino group of Lys-34 by the combined action of EpmA and EpmB, and then hydroxylated on the C5 position of the same residue by EpmC (if this protein is present). Lysylation is critical for the stimulatory effect of EF-P on peptide-bond formation. The lysylation moiety may extend toward the peptidyltransferase center and stabilize the terminal 3-CCA end of the tRNA. Hydroxylation of the C5 position on Lys-34 may allow additional potential stabilizing hydrogen-bond interactions with the P-tRNA.

The protein localises to the cytoplasm. Its pathway is protein biosynthesis; polypeptide chain elongation. Involved in peptide bond synthesis. Alleviates ribosome stalling that occurs when 3 or more consecutive Pro residues or the sequence PPG is present in a protein, possibly by augmenting the peptidyl transferase activity of the ribosome. Modification of Lys-34 is required for alleviation. The polypeptide is Elongation factor P (Proteus mirabilis (strain HI4320)).